The chain runs to 457 residues: Probable xyloglucan 6-xylosyltransferase 5 (457 aa).

Positions 1-40 (MGQDGSPAHKRPSGSGGGLPTTTLTNGGGRGGRGGLLPRG) are disordered. Topologically, residues 1-51 (MGQDGSPAHKRPSGSGGGLPTTTLTNGGGRGGRGGLLPRGRQMQKTFNNIK) are cytoplasmic. Positions 26–37 (NGGGRGGRGGLL) are enriched in gly residues. The helical; Signal-anchor for type II membrane protein transmembrane segment at 52–72 (ITILCGFVTILVLRGTIGVGN) threads the bilayer. Topologically, residues 73 to 457 (LGSSSADAVN…RTPVETKPQN (385 aa)) are lumenal. Residues 97-116 (RSDSDPTDLDEPQEGDMNPN) form a disordered region. A compositionally biased stretch (acidic residues) spans 101-110 (DPTDLDEPQE). N116 and N432 each carry an N-linked (GlcNAc...) asparagine glycan.

Belongs to the glycosyltransferase 34 family. As to quaternary structure, interacts with XXT2 and CSLC4. Interacts with FUT1 and XLT2. As to expression, highly expressed in roots, stems and cauline leaves, and at lower levels in rosette leaves, flowers and siliques.

It is found in the golgi apparatus membrane. It carries out the reaction Transfers an alpha-D-xylosyl residue from UDP-D-xylose to a glucose residue in xyloglucan, forming an alpha-(1-&gt;6)-D-xylosyl-D-glucose linkage.. Functionally, probable xyloglucan xylosyltransferase involved in the biosynthesis of xyloglucan in roots. May act in association with XXT1 and XXT2. Associates with other xyloglucan-synthesizing enzymes to form multiprotein complexes for xyloglucan synthesis in the Golgi. In Arabidopsis thaliana (Mouse-ear cress), this protein is Probable xyloglucan 6-xylosyltransferase 5.